Consider the following 277-residue polypeptide: Carbonyl reductase [NADPH] 1 (277 aa).

Residues 10 to 34 (VTGA…GDVL), 63 to 64 (DI), and Asn-90 each bind NADP(+). At Ser-30 the chain carries Phosphoserine. Glutathione contacts are provided by residues 95-97 (FKM) and Gln-106. Ser-140 contributes to the substrate binding site. Residue 193-194 (AY) coordinates glutathione. Tyr-194 (proton acceptor) is an active-site residue. NADP(+) contacts are provided by residues 194–198 (YGVTK) and 231–233 (VRT).

The protein belongs to the short-chain dehydrogenases/reductases (SDR) family. As to quaternary structure, monomer. Present in liver and kidney.

It is found in the cytoplasm. It catalyses the reaction a secondary alcohol + NADP(+) = a ketone + NADPH + H(+). The catalysed reaction is prostaglandin F2alpha + NADP(+) = prostaglandin E2 + NADPH + H(+). The enzyme catalyses prostaglandin E1 + NADP(+) = 15-oxoprostaglandin E1 + NADPH + H(+). It carries out the reaction menadione + NADPH + H(+) = menadiol + NADP(+). It catalyses the reaction prostaglandin D2 + NADP(+) = 15-oxoprostaglandin D2 + NADPH + H(+). The catalysed reaction is prostaglandin E2 + NADP(+) = 15-oxoprostaglandin E2 + NADPH + H(+). The enzyme catalyses prostaglandin F2alpha + NADP(+) = 15-oxoprostaglandin F2alpha + NADPH + H(+). It carries out the reaction daunorubicin + NADPH + H(+) = 13-dihydrodaunorubicin + NADP(+). It catalyses the reaction S-nitrosoglutathione + NADPH + H(+) = S-(hydroxysulfenamide)glutathione + NADP(+). The catalysed reaction is a primary alcohol + NADP(+) = an aldehyde + NADPH + H(+). The enzyme catalyses cortisol + NADPH + H(+) = 20beta-dihydrocortisol + NADP(+). It carries out the reaction corticosterone + NADPH + H(+) = 20beta-dihydrocorticosterone + NADP(+). Its function is as follows. NADPH-dependent reductase with broad substrate specificity. Catalyzes the reduction of a wide variety of carbonyl compounds including quinones, prostaglandins, menadione, plus various xenobiotics. Catalyzes the reduction of the antitumor anthracyclines doxorubicin and daunorubicin to the cardiotoxic compounds doxorubicinol and daunorubicinol. Can convert prostaglandin E to prostaglandin F2-alpha. Can bind glutathione, which explains its higher affinity for glutathione-conjugated substrates. Catalyzes the reduction of S-nitrosoglutathione. In addition, participates in the glucocorticoid metabolism by catalyzing the NADPH-dependent cortisol/corticosterone into 20beta-dihydrocortisol (20b-DHF) or 20beta-corticosterone (20b-DHB), which are weak agonists of NR3C1 and NR3C2 in adipose tissue. This Oryctolagus cuniculus (Rabbit) protein is Carbonyl reductase [NADPH] 1.